Reading from the N-terminus, the 426-residue chain is Methionine aminopeptidase 2 (426 aa).

The interval 1 to 72 is disordered; sequence MTSATTTEAT…QEQTNPPTVG (72 aa). The segment covering 10 to 34 has biased composition (basic and acidic residues); it reads TAKDLQEKLSLKENDVVEDDGKVEE. The span at 47-60 shows a compositional bias: basic residues; it reads KKKKKKKKSSKKKK. Histidine 179 contributes to the substrate binding site. Residues aspartate 199, aspartate 210, and histidine 279 each contribute to the a divalent metal cation site. Histidine 287 contacts substrate. The a divalent metal cation site is built by glutamate 312 and glutamate 407.

The protein belongs to the peptidase M24A family. Methionine aminopeptidase eukaryotic type 2 subfamily. Requires Co(2+) as cofactor. The cofactor is Zn(2+). Mn(2+) serves as cofactor. It depends on Fe(2+) as a cofactor.

It is found in the cytoplasm. It carries out the reaction Release of N-terminal amino acids, preferentially methionine, from peptides and arylamides.. Its function is as follows. Cotranslationally removes the N-terminal methionine from nascent proteins. The N-terminal methionine is often cleaved when the second residue in the primary sequence is small and uncharged (Met-Ala-, Cys, Gly, Pro, Ser, Thr, or Val). This Schizosaccharomyces pombe (strain 972 / ATCC 24843) (Fission yeast) protein is Methionine aminopeptidase 2 (fma2).